The primary structure comprises 363 residues: Biotin synthase (363 aa).

In terms of domain architecture, Radical SAM core spans 38–266 (NTVQVSTLLS…ETQVRLSAGR (229 aa)). Residues Cys-53, Cys-57, and Cys-60 each coordinate [4Fe-4S] cluster. Positions 97, 129, 189, and 261 each coordinate [2Fe-2S] cluster. Positions 315 to 363 (KAFEKKSQPESVAAEKSKYQSQGEKPRWSRPEHKIDRNLEAQQNAKTKA) are disordered. Residues 316-353 (AFEKKSQPESVAAEKSKYQSQGEKPRWSRPEHKIDRNL) are compositionally biased toward basic and acidic residues. Residues 354–363 (EAQQNAKTKA) are compositionally biased toward polar residues.

The protein belongs to the radical SAM superfamily. Biotin synthase family. Homodimer. It depends on [4Fe-4S] cluster as a cofactor. Requires [2Fe-2S] cluster as cofactor.

It catalyses the reaction (4R,5S)-dethiobiotin + (sulfur carrier)-SH + 2 reduced [2Fe-2S]-[ferredoxin] + 2 S-adenosyl-L-methionine = (sulfur carrier)-H + biotin + 2 5'-deoxyadenosine + 2 L-methionine + 2 oxidized [2Fe-2S]-[ferredoxin]. Its pathway is cofactor biosynthesis; biotin biosynthesis; biotin from 7,8-diaminononanoate: step 2/2. Its function is as follows. Catalyzes the conversion of dethiobiotin (DTB) to biotin by the insertion of a sulfur atom into dethiobiotin via a radical-based mechanism. The protein is Biotin synthase of Christiangramia forsetii (strain DSM 17595 / CGMCC 1.15422 / KT0803) (Gramella forsetii).